The chain runs to 1024 residues: Protein translocase subunit SecA (1024 aa).

Residues glutamine 143, 161 to 165, and aspartate 661 contribute to the ATP site; that span reads GEGKT. The tract at residues 970–1024 is disordered; it reads HEEAGSVYNAQPDGEPESQASKQQPVVADHSKPGRNDLCPCGSGKKYKNCHGREA. The Zn(2+) site is built by cysteine 1008, cysteine 1010, cysteine 1019, and histidine 1020. Residues 1014 to 1024 are compositionally biased toward basic residues; that stretch reads KKYKNCHGREA.

This sequence belongs to the SecA family. In terms of assembly, monomer and homodimer. Part of the essential Sec protein translocation apparatus which comprises SecA, SecYEG and auxiliary proteins SecDF. Other proteins may also be involved. Requires Zn(2+) as cofactor.

It localises to the cell inner membrane. Its subcellular location is the cytoplasm. The catalysed reaction is ATP + H2O + cellular proteinSide 1 = ADP + phosphate + cellular proteinSide 2.. Part of the Sec protein translocase complex. Interacts with the SecYEG preprotein conducting channel. Has a central role in coupling the hydrolysis of ATP to the transfer of proteins into and across the cell membrane, serving as an ATP-driven molecular motor driving the stepwise translocation of polypeptide chains across the membrane. The polypeptide is Protein translocase subunit SecA (Chlorobium luteolum (strain DSM 273 / BCRC 81028 / 2530) (Pelodictyon luteolum)).